Here is a 716-residue protein sequence, read N- to C-terminus: Probable basic-leucine zipper transcription factor O (716 aa).

The stretch at 20-142 (LLDDFSQLQQ…YQQRQQQYQD (123 aa)) forms a coiled coil. Residues 173-233 (SINYNMNNNN…NNKTTDNINN (61 aa)) form a disordered region. The bZIP domain maps to 381–444 (KSTESIKKMN…SVDLMKPSND (64 aa)). Positions 387 to 403 (KKMNQNKASRNYRQKKK) are basic motif. The leucine-zipper stretch occupies residues 406-413 (IKEIEDKL).

This sequence belongs to the bZIP family.

The protein localises to the nucleus. In terms of biological role, probable transcriptional regulator. The polypeptide is Probable basic-leucine zipper transcription factor O (bzpO) (Dictyostelium discoideum (Social amoeba)).